The following is a 66-amino-acid chain: DNA-directed RNA polymerase subunit Rpo10 (66 aa).

Zn(2+)-binding residues include C7, C10, C44, and C45.

It belongs to the archaeal Rpo10/eukaryotic RPB10 RNA polymerase subunit family. As to quaternary structure, part of the RNA polymerase complex. Requires Zn(2+) as cofactor.

It localises to the cytoplasm. It carries out the reaction RNA(n) + a ribonucleoside 5'-triphosphate = RNA(n+1) + diphosphate. DNA-dependent RNA polymerase (RNAP) catalyzes the transcription of DNA into RNA using the four ribonucleoside triphosphates as substrates. The sequence is that of DNA-directed RNA polymerase subunit Rpo10 from Pyrobaculum islandicum (strain DSM 4184 / JCM 9189 / GEO3).